The sequence spans 395 residues: S-adenosylmethionine synthase (395 aa).

Histidine 16 provides a ligand contact to ATP. Mg(2+) is bound at residue aspartate 18. Glutamate 44 lines the K(+) pocket. Positions 57 and 100 each coordinate L-methionine. Positions 100–110 are flexible loop; sequence QSPDIAQGVDD. ATP-binding positions include 174–176, 241–242, aspartate 250, 256–257, alanine 273, and lysine 277; these read DAK, RF, and RK. An L-methionine-binding site is contributed by aspartate 250. Lysine 281 contacts L-methionine.

The protein belongs to the AdoMet synthase family. Homotetramer; dimer of dimers. The cofactor is Mg(2+). Requires K(+) as cofactor.

Its subcellular location is the cytoplasm. It carries out the reaction L-methionine + ATP + H2O = S-adenosyl-L-methionine + phosphate + diphosphate. It participates in amino-acid biosynthesis; S-adenosyl-L-methionine biosynthesis; S-adenosyl-L-methionine from L-methionine: step 1/1. Catalyzes the formation of S-adenosylmethionine (AdoMet) from methionine and ATP. The overall synthetic reaction is composed of two sequential steps, AdoMet formation and the subsequent tripolyphosphate hydrolysis which occurs prior to release of AdoMet from the enzyme. This chain is S-adenosylmethionine synthase, found in Limosilactobacillus reuteri (strain DSM 20016) (Lactobacillus reuteri).